The following is a 529-amino-acid chain: Snake venom 5'-nucleotidase (529 aa).

Residue glycine 1 is a signal peptide. Aspartate 12 and histidine 14 together coordinate Zn(2+). Cysteine 27 and cysteine 32 form a disulfide bridge. Aspartate 60, asparagine 92, histidine 195, and histidine 218 together coordinate Zn(2+). Residues asparagine 308 and asparagine 322 are each glycosylated (N-linked (GlcNAc...) asparagine). Cystine bridges form between cysteine 328-cysteine 333 and cysteine 340-cysteine 362. Arginine 329 contributes to the AMP binding site. Asparagine 365, arginine 370, and phenylalanine 393 together coordinate AMP. Cysteine 452 and cysteine 455 are oxidised to a cystine. AMP-binding residues include phenylalanine 476 and aspartate 482. Serine 525 carries the GPI-anchor amidated serine lipid modification. Positions 526-529 (AGSL) are cleaved as a propeptide — removed in mature form.

Belongs to the 5'-nucleotidase family. Requires Zn(2+) as cofactor. In terms of processing, venom 5'-nucleotidases (or a part thereof) may be released into the venom via exosome-like vesicles. They may be attached via a GPI anchor to the membrane of these vesicles. Soluble forms of 5'-nucleotidase might be released by cleavage of the ectodomain in the exosome-like vesicles or venom gland cells. In terms of tissue distribution, expressed by the venom gland.

Its subcellular location is the membrane. It carries out the reaction a ribonucleoside 5'-phosphate + H2O = a ribonucleoside + phosphate. Functionally, hydrolyzes nucleotides into nucleosides. Snake venom 5'-nucleotidases are widely distributed among venomous snake taxa, but there is a lack of information about their biological activities. They have been shown to inhibit platelet aggregation. This effect may be due to the liberation of inhibitory AMP or adenosine by its action on ADP released upon initiation of aggregation. Venom 5'-nucleotidases are also known to synergistically act in vivo with other toxins like ADPases, phospholipases, and disintegrins to exert a more pronounced anti-coagulant effect. The protein is Snake venom 5'-nucleotidase of Naja atra (Chinese cobra).